Consider the following 230-residue polypeptide: Large ribosomal subunit protein uL1 (230 aa).

This sequence belongs to the universal ribosomal protein uL1 family. As to quaternary structure, part of the 50S ribosomal subunit.

In terms of biological role, binds directly to 23S rRNA. The L1 stalk is quite mobile in the ribosome, and is involved in E site tRNA release. Protein L1 is also a translational repressor protein, it controls the translation of the L11 operon by binding to its mRNA. The polypeptide is Large ribosomal subunit protein uL1 (Limosilactobacillus fermentum (strain NBRC 3956 / LMG 18251) (Lactobacillus fermentum)).